A 359-amino-acid chain; its full sequence is D-alanine--D-alanine ligase (359 aa).

The ATP-grasp domain occupies Lys141–Asn346. Residue Ile172 to Glu227 participates in ATP binding. Residues Asp299, Glu313, and Asn315 each contribute to the Mg(2+) site.

The protein belongs to the D-alanine--D-alanine ligase family. Requires Mg(2+) as cofactor. Mn(2+) is required as a cofactor.

The protein resides in the cytoplasm. It catalyses the reaction 2 D-alanine + ATP = D-alanyl-D-alanine + ADP + phosphate + H(+). Its pathway is cell wall biogenesis; peptidoglycan biosynthesis. In terms of biological role, cell wall formation. The protein is D-alanine--D-alanine ligase of Thermoanaerobacter pseudethanolicus (strain ATCC 33223 / 39E) (Clostridium thermohydrosulfuricum).